The primary structure comprises 128 residues: Adrenodoxin (128 aa).

A Phosphoserine modification is found at S3. An N6-acetyllysine; alternate modification is found at K6. Residue K6 is modified to N6-succinyllysine; alternate. Positions 7–111 (VTVNFINRDG…NMTVRVPDAV (105 aa)) constitute a 2Fe-2S ferredoxin-type domain. 4 residues coordinate [2Fe-2S] cluster: C46, C52, C55, and C92. K98 carries the post-translational modification N6-succinyllysine. Position 117 is a phosphoserine (S117).

It belongs to the adrenodoxin/putidaredoxin family. In terms of assembly, interacts with CYP11A1. Requires [2Fe-2S] cluster as cofactor.

Its subcellular location is the mitochondrion matrix. Essential for the synthesis of various steroid hormones. Participates in the reduction of mitochondrial cytochrome P450 for steroidogenesis. Transfers electrons from adrenodoxin reductase to CYP11A1, a cytochrome P450 that catalyzes cholesterol side-chain cleavage. Does not form a ternary complex with adrenodoxin reductase and CYP11A1 but shuttles between the two enzymes to transfer electrons. The chain is Adrenodoxin (FDX1) from Ovis aries (Sheep).